The primary structure comprises 115 residues: uncharacterized protein (115 aa).

This is an uncharacterized protein from Caenorhabditis elegans.